Reading from the N-terminus, the 183-residue chain is uncharacterized protein (183 aa).

This sequence belongs to the chlamydial CPn_0803/CT_584/TC_0873 family.

This is an uncharacterized protein from Chlamydia muridarum (strain MoPn / Nigg).